Reading from the N-terminus, the 601-residue chain is Polypeptide N-acetylgalactosaminyltransferase 11 (601 aa).

At 1 to 7 (MGSAALR) the chain is on the cytoplasmic side. A helical; Signal-anchor for type II membrane protein membrane pass occupies residues 8–28 (CFCYGCLFTSVTWTLLLFIYF). Asparagine 29 and asparagine 202 each carry an N-linked (GlcNAc...) asparagine glycan. The Lumenal segment spans residues 29 to 601 (NFSEESQGFR…SPSQQWHLEN (573 aa)). Residues 143-254 (LPMASIVICF…EMWLQPLLAP (112 aa)) form a catalytic subdomain A region. The catalytic subdomain B stretch occupies residues 312–374 (PFRSPTMAGG…PCSRVGHIFR (63 aa)). Residues 469–600 (RPKILQRGRL…GSPSQQWHLE (132 aa)) enclose the Ricin B-type lectin domain. A disulfide bridge links cysteine 486 with cysteine 505. An N-linked (GlcNAc...) asparagine glycan is attached at asparagine 508. 2 disulfide bridges follow: cysteine 529/cysteine 546 and cysteine 571/cysteine 589.

Belongs to the glycosyltransferase 2 family. GalNAc-T subfamily. Interacts with notch1. It depends on Mn(2+) as a cofactor. Requires Ca(2+) as cofactor.

The protein resides in the golgi apparatus membrane. The catalysed reaction is L-seryl-[protein] + UDP-N-acetyl-alpha-D-galactosamine = a 3-O-[N-acetyl-alpha-D-galactosaminyl]-L-seryl-[protein] + UDP + H(+). It carries out the reaction L-threonyl-[protein] + UDP-N-acetyl-alpha-D-galactosamine = a 3-O-[N-acetyl-alpha-D-galactosaminyl]-L-threonyl-[protein] + UDP + H(+). Its pathway is protein modification; protein glycosylation. In terms of biological role, polypeptide N-acetylgalactosaminyltransferase that catalyzes the initiation of protein O-linked glycosylation and is involved in left/right asymmetry by mediating O-glycosylation of NOTCH1. O-glycosylation of NOTCH1 promotes activation of NOTCH1, modulating the balance between motile and immotile (sensory) cilia at the left-right organiser (LRO). Polypeptide N-acetylgalactosaminyltransferases catalyze the transfer of an N-acetyl-D-galactosamine residue to a serine or threonine residue on the protein receptor. This chain is Polypeptide N-acetylgalactosaminyltransferase 11 (galnt11), found in Xenopus tropicalis (Western clawed frog).